We begin with the raw amino-acid sequence, 1488 residues long: MIERGKFRSLTLINWNGFFARTFDLDELVTTLSGGNGAGKSTTMAAFVTALIPDLTLLHFRNTTEAGATSGSRDKGLHGKLKAGVCYSMLDTINSRHQRVVVGVRLQQVAGRDRKVDIKPFAIQGLPMSVQPTQLVTETLNERQARVLSLAELKDKLDEMEGVQFKQFNSITDYHSLMFDLGIIARRLRSASDRSKFYRLIEASLYGGISSAITRSLRDYLLPENSGVRKAFQDMEAALRENRLTLEAIRVTQSDRDLFKHLISEATDYVAADYMRHANERRVHLDQALAFRRELYTSRKQLAAEQYKHVDMARELGEHNGAEGSLEADYQAASDHLNLVQTALRQQEKIERYEADLEELQIRLEEQNEVVAEAAEMQDENEARAEAAELEVDELKSQLADYQQALDVQQTRAIQYNQAISALARAKELCHLPDLTPESAAEWLDTFQAKEQEATEKLLSLEQKMSVAQTAHSQFEQAYQLVAAINGPLARSEAWDVARELLRDGVNQRHLAEQVQPLRMRLSELEQRLREQQEAERLLAEFCKRQGKNFDIDELEALHQELEARIASLSDSVSSASEQRMALRQEQEQLQSRIQHLMRRAPVWLAAQNSLNQLSEQCGEEFTSSQEVTEYLQQLLEREREAIVERDEVGARKNAVDEEIERLSQPGGAEDQRLNALAERFGGVLLSEIYDDVSLEDAPYFSALYGPSRHAIVVPDLSQIAEQLEGLTDCPEDLYLIEGDPQSFDDSVFSVDELEKAVVVKIADRQWRYSRFPSLPIFGRAARENRIESLHAEREVLSERFATLSFDVQKTQRLHQAFSRFIGSHLSVAFEDDPEAEIRRLNGRRVELERALATHENDNQQQRLQFEQAKEGVSALNRLLPRLNLLADETLADRVDEIQERLDEAQEAARFVQQYGNQLAKLEPVVSVLQSDPEQFEQLKEDYAWSQQMQRDARQQAFALAEVVERRAHFSYSDSAEMLSGNSDLNEKLRQRLEQAEAERTRAREALRSHAAQLSQYSQVLASLKSSYDTKKELLNDLQRELQDIGVRADSGAEERARQRRDELHAQLSNNRSRRNQLEKALTFCEAEMENLTRKLRKLERDYHEMREQVVTAKAGWCAVMRMVKDNGVERRLHRRELAYLSADELRSMSDKALGALRLAVADNEHLRDVLRLSEDPKRPERKIQFFVAVYQHLRERIRQDIIRTDDPVEAIEQMEIELSRLTEELTSREQKLAISSRSVANIIRKTIQREQNRIRMLNQGLQSVSFGQVNSVRLNVNVRETHATLLDVLSEQQEQHQDLFNSNRLTFSEALAKLYQRLNPQIDMGQRTPQTIGEELLDYRNYLEMEVEVNRGSDGWLRAESGALSTGEAIGTGMSILVMVVQSWEDEARRLRGKDISPCRLLFLDEAARLDARSIATLFELCERLQMQLIIAAPENISPEKGTTYKLVRKVFQNTEHVHVVGLRGFAPQLPETLPGTQTEDTPSEAS.

34–41 (GGNGAGKS) is an ATP binding site. Coiled coils occupy residues 326 to 418 (LEAD…QYNQ), 444 to 472 (LDTF…QTAH), and 509 to 602 (RHLA…RRAP). The tract at residues 666–783 (PGGAEDQRLN…SLPIFGRAAR (118 aa)) is flexible hinge. Coiled-coil stretches lie at residues 835–923 (EAEI…AKLE), 977–1116 (EMLS…AKAG), and 1209–1265 (VEAI…LQSV). The tract at residues 1049 to 1074 (ADSGAEERARQRRDELHAQLSNNRSR) is disordered. Over residues 1051–1065 (SGAEERARQRRDELH) the composition is skewed to basic and acidic residues.

This sequence belongs to the SMC family. MukB subfamily. In terms of assembly, homodimerization via its hinge domain. Binds to DNA via its C-terminal region. Interacts, and probably forms a ternary complex, with MukE and MukF via its C-terminal region. The complex formation is stimulated by calcium or magnesium. Interacts with tubulin-related protein FtsZ.

The protein localises to the cytoplasm. Its subcellular location is the nucleoid. Functionally, plays a central role in chromosome condensation, segregation and cell cycle progression. Functions as a homodimer, which is essential for chromosome partition. Involved in negative DNA supercoiling in vivo, and by this means organize and compact chromosomes. May achieve or facilitate chromosome segregation by condensation DNA from both sides of a centrally located replisome during cell division. This Salmonella agona (strain SL483) protein is Chromosome partition protein MukB.